We begin with the raw amino-acid sequence, 172 residues long: Achaete-scute homolog 4 (172 aa).

Residues 72–124 (AFLRKRNERERQRVRCVNEGYARLRDHLPRELADKRLSKVETLRAAIDYIKHL) form the bHLH domain. Residues 144–172 (QRRAECNSDGESKASSAPSPSSEPEEGGS) are disordered. Residues 145 to 155 (RRAECNSDGES) are compositionally biased toward basic and acidic residues. The segment covering 156–165 (KASSAPSPSS) has biased composition (low complexity).

Expressed in skin. 7-fold higher expression in fetal skin than in adult skin. Weak expression also detected in fetal lung, aorta and brain, and in adult stomach, kidney, ovary and breast.

The protein localises to the nucleus. Its function is as follows. Could be a transcriptional regulator involved in skin development. The polypeptide is Achaete-scute homolog 4 (ASCL4) (Homo sapiens (Human)).